Here is a 392-residue protein sequence, read N- to C-terminus: Cell division protein FtsZ (392 aa).

GTP-binding positions include 24–28, 111–113, Glu-142, Arg-145, and Asp-189; these read GGGCN and GTG.

It belongs to the FtsZ family. As to quaternary structure, homodimer. Polymerizes to form a dynamic ring structure in a strictly GTP-dependent manner. Interacts directly with several other division proteins.

The protein localises to the cytoplasm. Essential cell division protein that forms a contractile ring structure (Z ring) at the future cell division site. The regulation of the ring assembly controls the timing and the location of cell division. One of the functions of the FtsZ ring is to recruit other cell division proteins to the septum to produce a new cell wall between the dividing cells. Binds GTP and shows GTPase activity. This Neisseria gonorrhoeae protein is Cell division protein FtsZ.